The following is a 138-amino-acid chain: Putative pre-16S rRNA nuclease (138 aa).

The protein belongs to the YqgF nuclease family.

It is found in the cytoplasm. Its function is as follows. Could be a nuclease involved in processing of the 5'-end of pre-16S rRNA. The chain is Putative pre-16S rRNA nuclease from Azobacteroides pseudotrichonymphae genomovar. CFP2.